Reading from the N-terminus, the 35-residue chain is Thionin NsW2 (35 aa).

Intrachain disulfides connect C4–C32, C12–C30, and C16–C26.

In terms of processing, contains 4 disulfide bonds.

It is found in the secreted. Functionally, antimicrobial peptide disrupting membranes. Has antibacterial against Gram-positive bacteria S.aureus (MIC=6.5 uM) and B.subtilis (MIC=3.25 uM) but not against Gram-negative bacterium E.coli. Has antifungal activity against C.albicans (MIC=3.25 uM). This Nigella sativa (Black cumin) protein is Thionin NsW2.